The chain runs to 207 residues: High frequency lysogenization protein HflD homolog (207 aa).

It belongs to the HflD family.

The protein resides in the cytoplasm. It localises to the cell inner membrane. The polypeptide is High frequency lysogenization protein HflD homolog (Methylococcus capsulatus (strain ATCC 33009 / NCIMB 11132 / Bath)).